The sequence spans 169 residues: Large ribosomal subunit protein uL10 (169 aa).

This sequence belongs to the universal ribosomal protein uL10 family. Part of the ribosomal stalk of the 50S ribosomal subunit. The N-terminus interacts with L11 and the large rRNA to form the base of the stalk. The C-terminus forms an elongated spine to which L12 dimers bind in a sequential fashion forming a multimeric L10(L12)X complex.

Its function is as follows. Forms part of the ribosomal stalk, playing a central role in the interaction of the ribosome with GTP-bound translation factors. This Orientia tsutsugamushi (strain Ikeda) (Rickettsia tsutsugamushi) protein is Large ribosomal subunit protein uL10.